A 544-amino-acid polypeptide reads, in one-letter code: Chaperonin GroEL (544 aa).

Residues 29–32 (TLGP), 86–90 (DGTTT), G413, 476–478 (NAA), and D492 each bind ATP.

The protein belongs to the chaperonin (HSP60) family. As to quaternary structure, forms a cylinder of 14 subunits composed of two heptameric rings stacked back-to-back. Interacts with the co-chaperonin GroES.

It localises to the cytoplasm. It carries out the reaction ATP + H2O + a folded polypeptide = ADP + phosphate + an unfolded polypeptide.. Functionally, together with its co-chaperonin GroES, plays an essential role in assisting protein folding. The GroEL-GroES system forms a nano-cage that allows encapsulation of the non-native substrate proteins and provides a physical environment optimized to promote and accelerate protein folding. In Bacillus pumilus (strain SAFR-032), this protein is Chaperonin GroEL.